We begin with the raw amino-acid sequence, 172 residues long: Protein nemuri (172 aa).

The N-terminal stretch at 1–25 (MSAKYTLIFALAALCCLVFSTEAAA) is a signal peptide. The segment at 27-172 (RSRVLSSRRG…KRRSGKGNKA (146 aa)) is disordered. 3 stretches are compositionally biased toward basic and acidic residues: residues 35–50 (RGSELVEKTSDNKEDS), 58–90 (DLERQEQEEQNDRLEGRSDDVAEGSDNKEDKET), and 97–108 (TIVKPNKDDARA). Residues 45–74 (DNKEDSELAAQEQDLERQEQEEQNDRLEGR) are a coiled coil. The segment covering 109-172 (RRIVRAGRRR…KRRSGKGNKA (64 aa)) has biased composition (basic residues).

As to expression, detected in the brain where it accumulates in the dorsal fan-shaped body following sleep deprivation (at protein level). Expressed in the adult body.

It localises to the secreted. Functionally, antimicrobial protein which is essential for the homeostatic regulation of sleep. Promotes sleep following sleep deprivation or bacterial infection and increases survival following bacterial infection. Likely to promote survival to bacterial infection in two ways; by contributing to the innate immune response and by promoting sleep during sickness to aid recovery. This chain is Protein nemuri, found in Drosophila melanogaster (Fruit fly).